The following is a 24-amino-acid chain: Protein YriA (24 aa).

The protein is Protein YriA of Escherichia coli (strain K12).